Consider the following 397-residue polypeptide: Acetate kinase (397 aa).

N7 serves as a coordination point for Mg(2+). Residue K14 participates in ATP binding. Residue R90 coordinates substrate. The active-site Proton donor/acceptor is the D147. Residues 207–211, 282–284, and 330–334 each bind ATP; these read HLGNG, DFR, and GLGEN. E383 lines the Mg(2+) pocket.

Belongs to the acetokinase family. In terms of assembly, homodimer. The cofactor is Mg(2+). It depends on Mn(2+) as a cofactor.

The protein localises to the cytoplasm. The catalysed reaction is acetate + ATP = acetyl phosphate + ADP. It functions in the pathway metabolic intermediate biosynthesis; acetyl-CoA biosynthesis; acetyl-CoA from acetate: step 1/2. Catalyzes the formation of acetyl phosphate from acetate and ATP. Can also catalyze the reverse reaction. The protein is Acetate kinase of Clostridium botulinum (strain Loch Maree / Type A3).